Reading from the N-terminus, the 472-residue chain is Argininosuccinate lyase (472 aa).

It belongs to the lyase 1 family. Argininosuccinate lyase subfamily.

The protein resides in the cytoplasm. It catalyses the reaction 2-(N(omega)-L-arginino)succinate = fumarate + L-arginine. The protein operates within amino-acid biosynthesis; L-arginine biosynthesis; L-arginine from L-ornithine and carbamoyl phosphate: step 3/3. The protein is Argininosuccinate lyase of Rhodococcus opacus (strain B4).